The chain runs to 119 residues: Large ribosomal subunit protein bL20 (119 aa).

Belongs to the bacterial ribosomal protein bL20 family.

Functionally, binds directly to 23S ribosomal RNA and is necessary for the in vitro assembly process of the 50S ribosomal subunit. It is not involved in the protein synthesizing functions of that subunit. In Verminephrobacter eiseniae (strain EF01-2), this protein is Large ribosomal subunit protein bL20.